The primary structure comprises 176 residues: MVTIALGSRNPVKINATKEALDVLKLNWDLIGIEVDNGVDKQPFCDQTYVGARNRALNVIRVTNADIGLGIEGGVCNVYGKFIANAVVYVITKEGLENFAISSSFTLPSSMVSLILQGKELGEASDIIFKTNNSKTKEGAIGLLTNNVINRKMLYVQPIVLALYPIYNTMINNTPF.

Asp36 is a Mg(2+) binding site.

This sequence belongs to the YjjX NTPase family. Homodimer. Mg(2+) serves as cofactor. Mn(2+) is required as a cofactor.

It carries out the reaction XTP + H2O = XDP + phosphate + H(+). It catalyses the reaction ITP + H2O = IDP + phosphate + H(+). In terms of biological role, phosphatase that hydrolyzes non-canonical purine nucleotides such as XTP and ITP to their respective diphosphate derivatives. Probably excludes non-canonical purines from DNA/RNA precursor pool, thus preventing their incorporation into DNA/RNA and avoiding chromosomal lesions. The protein is Probable inosine/xanthosine triphosphatase of Saccharolobus islandicus (strain M.14.25 / Kamchatka #1) (Sulfolobus islandicus).